Here is a 793-residue protein sequence, read N- to C-terminus: Endonuclease MutS2 (793 aa).

335–342 provides a ligand contact to ATP; it reads GPNTGGKT. The region spanning 718–793 is the Smr domain; the sequence is IDVRGYNLEE…ESGVTIVELR (76 aa).

The protein belongs to the DNA mismatch repair MutS family. MutS2 subfamily. As to quaternary structure, homodimer. Binds to stalled ribosomes, contacting rRNA.

Its function is as follows. Endonuclease that is involved in the suppression of homologous recombination and thus may have a key role in the control of bacterial genetic diversity. Acts as a ribosome collision sensor, splitting the ribosome into its 2 subunits. Detects stalled/collided 70S ribosomes which it binds and splits by an ATP-hydrolysis driven conformational change. Acts upstream of the ribosome quality control system (RQC), a ribosome-associated complex that mediates the extraction of incompletely synthesized nascent chains from stalled ribosomes and their subsequent degradation. Probably generates substrates for RQC. In Acetivibrio thermocellus (strain ATCC 27405 / DSM 1237 / JCM 9322 / NBRC 103400 / NCIMB 10682 / NRRL B-4536 / VPI 7372) (Clostridium thermocellum), this protein is Endonuclease MutS2.